A 174-amino-acid polypeptide reads, in one-letter code: uncharacterized protein (174 aa).

In terms of domain architecture, N-acetyltransferase spans 42 to 174 (SSNKNINLYE…GVKGMFWYPR (133 aa)).

Belongs to the acetyltransferase family. Ycf52 subfamily.

It is found in the plastid. The protein resides in the chloroplast. This is an uncharacterized protein from Pyropia yezoensis (Susabi-nori).